The primary structure comprises 513 residues: GMP synthase [glutamine-hydrolyzing] (513 aa).

Residues 9–198 (LILVLDFGSQ…VRRVCNCTGE (190 aa)) form the Glutamine amidotransferase type-1 domain. Cys-86 functions as the Nucleophile in the catalytic mechanism. Catalysis depends on residues His-172 and Glu-174. The GMPS ATP-PPase domain occupies 199-388 (WTMENFIEIE…LGIPEHLVWR (190 aa)). Position 226–232 (226–232 (SGGVDSS)) interacts with ATP.

In terms of assembly, homodimer.

It catalyses the reaction XMP + L-glutamine + ATP + H2O = GMP + L-glutamate + AMP + diphosphate + 2 H(+). It participates in purine metabolism; GMP biosynthesis; GMP from XMP (L-Gln route): step 1/1. In terms of biological role, catalyzes the synthesis of GMP from XMP. The protein is GMP synthase [glutamine-hydrolyzing] of Staphylococcus epidermidis (strain ATCC 12228 / FDA PCI 1200).